A 156-amino-acid polypeptide reads, in one-letter code: Transcription elongation factor GreA (156 aa).

Residues 7 to 27 (MTQEGLDKLKLELENLKLVKR) are a coiled coil.

The protein belongs to the GreA/GreB family.

Its function is as follows. Necessary for efficient RNA polymerase transcription elongation past template-encoded arresting sites. The arresting sites in DNA have the property of trapping a certain fraction of elongating RNA polymerases that pass through, resulting in locked ternary complexes. Cleavage of the nascent transcript by cleavage factors such as GreA or GreB allows the resumption of elongation from the new 3'terminus. GreA releases sequences of 2 to 3 nucleotides. The polypeptide is Transcription elongation factor GreA (Lactococcus lactis subsp. lactis (strain IL1403) (Streptococcus lactis)).